Here is an 86-residue protein sequence, read N- to C-terminus: DNA-directed RNA polymerase subunit omega (86 aa).

It belongs to the RNA polymerase subunit omega family. The RNAP catalytic core consists of 2 alpha, 1 beta, 1 beta' and 1 omega subunit. When a sigma factor is associated with the core the holoenzyme is formed, which can initiate transcription.

The catalysed reaction is RNA(n) + a ribonucleoside 5'-triphosphate = RNA(n+1) + diphosphate. Its function is as follows. Promotes RNA polymerase assembly. Latches the N- and C-terminal regions of the beta' subunit thereby facilitating its interaction with the beta and alpha subunits. This is DNA-directed RNA polymerase subunit omega from Agathobacter rectalis (strain ATCC 33656 / DSM 3377 / JCM 17463 / KCTC 5835 / VPI 0990) (Eubacterium rectale).